Here is a 260-residue protein sequence, read N- to C-terminus: tRNA (guanine-N(1)-)-methyltransferase (260 aa).

Residues Gly-117 and 137–142 each bind S-adenosyl-L-methionine; that span reads LGDFVL.

Belongs to the RNA methyltransferase TrmD family. As to quaternary structure, homodimer.

The protein localises to the cytoplasm. The catalysed reaction is guanosine(37) in tRNA + S-adenosyl-L-methionine = N(1)-methylguanosine(37) in tRNA + S-adenosyl-L-homocysteine + H(+). In terms of biological role, specifically methylates guanosine-37 in various tRNAs. This chain is tRNA (guanine-N(1)-)-methyltransferase, found in Cupriavidus metallidurans (strain ATCC 43123 / DSM 2839 / NBRC 102507 / CH34) (Ralstonia metallidurans).